A 632-amino-acid polypeptide reads, in one-letter code: 1-deoxy-D-xylulose-5-phosphate synthase (632 aa).

Thiamine diphosphate contacts are provided by residues His74 and 115-117 (AHS). Residue Asp146 participates in Mg(2+) binding. Thiamine diphosphate is bound by residues 147–148 (GA), Asn176, Tyr283, and Glu365. Asn176 is a binding site for Mg(2+).

Belongs to the transketolase family. DXPS subfamily. As to quaternary structure, homodimer. Mg(2+) is required as a cofactor. It depends on thiamine diphosphate as a cofactor.

It catalyses the reaction D-glyceraldehyde 3-phosphate + pyruvate + H(+) = 1-deoxy-D-xylulose 5-phosphate + CO2. Its pathway is metabolic intermediate biosynthesis; 1-deoxy-D-xylulose 5-phosphate biosynthesis; 1-deoxy-D-xylulose 5-phosphate from D-glyceraldehyde 3-phosphate and pyruvate: step 1/1. Functionally, catalyzes the acyloin condensation reaction between C atoms 2 and 3 of pyruvate and glyceraldehyde 3-phosphate to yield 1-deoxy-D-xylulose-5-phosphate (DXP). This Paraburkholderia phymatum (strain DSM 17167 / CIP 108236 / LMG 21445 / STM815) (Burkholderia phymatum) protein is 1-deoxy-D-xylulose-5-phosphate synthase.